The chain runs to 296 residues: Giardin subunit alpha-4 (296 aa).

Annexin repeat units follow at residues 3–72, 74–146, 153–223, and 226–294; these read ATVS…VHAW, SRFE…GWVK, KSIK…AHHW, and DPGQ…VFWR.

The protein belongs to the annexin family. Giardin subunit alpha subfamily.

Its subcellular location is the cytoplasm. It is found in the cytoskeleton. In terms of biological role, giardins are involved in parasite attachment to the intestinal mucosa and in the cytoskeletal disassembly and reassembly that marks the transition from infectious trophozoite to transmissible cyst. They may interact with other cytoskeletal proteins such as microtubules in the microribbons or crossbridges, to maintain the integrity of the ventral disk. The sequence is that of Giardin subunit alpha-4 from Giardia intestinalis (Giardia lamblia).